Consider the following 291-residue polypeptide: Cytochrome c-552 (291 aa).

Residues 1-23 form the signal peptide; that stretch reads MKKTLMASAVGAVIAFGTHGAMA. 6 residues coordinate heme c: C68, C71, H72, C157, C161, and H162.

In terms of processing, binds 2 heme c groups per subunit.

It localises to the periplasm. May play a role in nitrite reduction. Shows peroxidase activity on proteolytic modification. In Stutzerimonas stutzeri (Pseudomonas stutzeri), this protein is Cytochrome c-552 (nirB).